Reading from the N-terminus, the 274-residue chain is Beta-lysine N(6)-acetyltransferase (274 aa).

In terms of domain architecture, N-acetyltransferase spans 123–274 (FHLKIANETD…DMNFWYKLSE (152 aa)).

This sequence belongs to the acetyltransferase family.

It catalyses the reaction (3S)-3,6-diaminohexanoate + acetyl-CoA = (3S)-6-acetamido-3-aminohexanoate + CoA + H(+). In terms of biological role, catalyzes the acetylation of beta-lysine to N6-acetyl-beta-lysine, a compatible solute produced by methanogenic archaea that helps cells to cope with salt stress. This Methanococcus maripaludis (strain DSM 14266 / JCM 13030 / NBRC 101832 / S2 / LL) protein is Beta-lysine N(6)-acetyltransferase.